The sequence spans 231 residues: Octanoyl-[acyl-carrier-protein]:protein N-octanoyltransferase LIPT2, mitochondrial (231 aa).

The transit peptide at Met-1–Gln-31 directs the protein to the mitochondrion. One can recognise a BPL/LPL catalytic domain in the interval Gly-41 to Leu-224. Residues Arg-85 to His-92, Ala-154 to Gly-156, and Gly-167 to Ala-169 contribute to the substrate site. Cys-185 acts as the Acyl-thioester intermediate in catalysis.

The protein belongs to the LipB family.

It localises to the mitochondrion. It carries out the reaction octanoyl-[ACP] + L-lysyl-[protein] = N(6)-octanoyl-L-lysyl-[protein] + holo-[ACP] + H(+). It functions in the pathway protein modification; protein lipoylation via endogenous pathway; protein N(6)-(lipoyl)lysine from octanoyl-[acyl-carrier-protein]: step 1/2. Functionally, catalyzes the transfer of endogenously produced octanoic acid from octanoyl-acyl-carrier-protein (octanoyl-ACP) onto the lipoyl domains of lipoate-dependent enzymes such as the protein H of the glycine cleavage system (GCSH). Lipoyl-ACP can also act as a substrate although octanoyl-ACP is likely to be the physiological substrate. In Homo sapiens (Human), this protein is Octanoyl-[acyl-carrier-protein]:protein N-octanoyltransferase LIPT2, mitochondrial.